The primary structure comprises 152 residues: Large ribosomal subunit protein bL9 (152 aa).

Belongs to the bacterial ribosomal protein bL9 family.

In terms of biological role, binds to the 23S rRNA. The sequence is that of Large ribosomal subunit protein bL9 from Prochlorococcus marinus (strain SARG / CCMP1375 / SS120).